The sequence spans 208 residues: dTTP/UTP pyrophosphatase (208 aa).

The active-site Proton acceptor is the Asp-78.

Belongs to the Maf family. YhdE subfamily. A divalent metal cation is required as a cofactor.

The protein localises to the cytoplasm. The catalysed reaction is dTTP + H2O = dTMP + diphosphate + H(+). The enzyme catalyses UTP + H2O = UMP + diphosphate + H(+). In terms of biological role, nucleoside triphosphate pyrophosphatase that hydrolyzes dTTP and UTP. May have a dual role in cell division arrest and in preventing the incorporation of modified nucleotides into cellular nucleic acids. The sequence is that of dTTP/UTP pyrophosphatase from Maricaulis maris (strain MCS10) (Caulobacter maris).